A 201-amino-acid polypeptide reads, in one-letter code: Reticulon-like protein B10 (201 aa).

One can recognise a Reticulon domain in the interval 14-201 (VADLIMWKNR…KPTNKIKKMQ (188 aa)). Transmembrane regions (helical) follow at residues 25–45 (GGFLLLGSTTLLWFLFEKCGY), 46–66 (SFFPFVVNTQLLSVVILFLWA), and 135–155 (FLNFLTILYLGVVLSLLIPFL).

The protein localises to the endoplasmic reticulum membrane. The protein is Reticulon-like protein B10 (RTNLB10) of Arabidopsis thaliana (Mouse-ear cress).